Consider the following 249-residue polypeptide: Methionine aminopeptidase (249 aa).

H77 provides a ligand contact to substrate. A divalent metal cation-binding residues include D94, D105, and H168. H175 is a binding site for substrate. Residues E201 and E232 each contribute to the a divalent metal cation site.

Belongs to the peptidase M24A family. Methionine aminopeptidase type 1 subfamily. In terms of assembly, monomer. Co(2+) is required as a cofactor. Requires Zn(2+) as cofactor. Mn(2+) serves as cofactor. The cofactor is Fe(2+).

The enzyme catalyses Release of N-terminal amino acids, preferentially methionine, from peptides and arylamides.. Its function is as follows. Removes the N-terminal methionine from nascent proteins. The N-terminal methionine is often cleaved when the second residue in the primary sequence is small and uncharged (Met-Ala-, Cys, Gly, Pro, Ser, Thr, or Val). Requires deformylation of the N(alpha)-formylated initiator methionine before it can be hydrolyzed. The polypeptide is Methionine aminopeptidase (Clostridium perfringens (strain 13 / Type A)).